The primary structure comprises 722 residues: Solute carrier organic anion transporter family member 4A1 (722 aa).

Residues 1–52 (MPLHQLGDKPLTFPSPNSAMENGLDHTPPSRRASPGTPLSPGSLRSAAHSPL) form a disordered region. The Cytoplasmic portion of the chain corresponds to 1-103 (MPLHQLGDKP…PCLQVLNTPK (103 aa)). A Phosphoserine modification is found at serine 34. Threonine 37 carries the post-translational modification Phosphothreonine. Phosphoserine occurs at positions 40, 43, 46, and 50. Residues 104–124 (GILFFLCAAAFLQGMTVNGFI) traverse the membrane as a helical segment. Residues 125–143 (NTVITSLERRYDLHSYQSG) are Extracellular-facing. A helical transmembrane segment spans residues 144–164 (LIASSYDIAACLCLTFVSYFG). Residues 165–170 (GSGHKP) are Cytoplasmic-facing. Residues 171 to 195 (RWLGWGVLLMGTGSLVFALPHFTAG) traverse the membrane as a helical segment. The Extracellular segment spans residues 196–222 (RYEVELDAGVRTCPANPGAVCADSTSG). The helical transmembrane segment at 223–253 (LSRYQLVFMLGQFLHGVGATPLYTLGVTYLD) threads the bilayer. Topologically, residues 254–272 (ENVKSSCSPVYIAIFYTAA) are cytoplasmic. A helical membrane pass occupies residues 273-293 (ILGPAAGYLIGGALLNIYTEM). Over 294-307 (GRRTELTTESPLWV) the chain is Extracellular. Residues 308 to 332 (GAWWVGFLGSGAAAFFTAVPILGYP) form a helical membrane-spanning segment. Residues 333 to 378 (RQLPGSQRYAVMRAAEMHQLKDSSRGEASNPDFGKTIRDLPLSIWL) are Cytoplasmic-facing. A helical transmembrane segment spans residues 379-400 (LLKNPTFILLCLAGATEATLIT). Over 401–420 (GMSTFSPKFLESQFSLSASE) the chain is Extracellular. A helical membrane pass occupies residues 421-444 (AATLFGYLVVPAGGGGTFLGGFFV). Residues 445–448 (NKLR) are Cytoplasmic-facing. A helical transmembrane segment spans residues 449–471 (LRGSAVIKFCLFCTVVSLLGILV). The Extracellular segment spans residues 472 to 580 (FSLHCPSVPM…TSTCQRKPLL (109 aa)). Residues 498-555 (LNLTAPCNAACSCQPEHYSPVCGSDGLMYFSLCHAGCPAATETNVDGQKVYRDCSCIP) form the Kazal-like domain. Asparagine 499 carries N-linked (GlcNAc...) asparagine glycosylation. Intrachain disulfides connect cysteine 504–cysteine 534, cysteine 510–cysteine 530, and cysteine 519–cysteine 553. N-linked (GlcNAc...) asparagine glycosylation is present at asparagine 557. A helical membrane pass occupies residues 581-603 (LVFIFVVIFFTFLSSIPALTATL). At 604–612 (RCVRDPQRS) the chain is on the cytoplasmic side. The chain crosses the membrane as a helical span at residues 613-638 (FALGIQWIVVRILGGIPGPIAFGWVI). Topologically, residues 639–671 (DKACLLWQDQCGQQGSCLVYQNSAMSRYILIMG) are extracellular. Residues 672–689 (LLYKVLGVLFFAIACFLY) traverse the membrane as a helical segment. The Cytoplasmic segment spans residues 690 to 722 (KPLSESSDGLETCLPSQSSAPDSATDSQLQSSV). The disordered stretch occupies residues 703–722 (LPSQSSAPDSATDSQLQSSV).

The protein belongs to the organo anion transporter (TC 2.A.60) family. As to expression, widely expressed. Expressed in placental trophoblasts. Expressed in pancreas, kidney, skeletal muscle, liver, lung, brain, heart, colon, small intestine, ovary, testis, prostate, thymus and spleen. In testis, primarily localized to Leydig cells.

Its subcellular location is the cell membrane. The catalysed reaction is 3,3',5-triiodo-L-thyronine(out) + L-glutamate(in) = 3,3',5-triiodo-L-thyronine(in) + L-glutamate(out). The enzyme catalyses L-thyroxine(out) + L-glutamate(in) = L-thyroxine(in) + L-glutamate(out). It carries out the reaction estrone 3-sulfate(out) + L-glutamate(in) = estrone 3-sulfate(in) + L-glutamate(out). It catalyses the reaction taurocholate(out) + L-glutamate(in) = taurocholate(in) + L-glutamate(out). The catalysed reaction is 3,3',5-triiodo-L-thyronine(out) = 3,3',5-triiodo-L-thyronine(in). The enzyme catalyses L-thyroxine(out) = L-thyroxine(in). It carries out the reaction 3,3',5'-triiodo-L-thyronine(out) = 3,3',5'-triiodo-L-thyronine(in). It catalyses the reaction estrone 3-sulfate(out) = estrone 3-sulfate(in). The catalysed reaction is 17beta-estradiol 17-O-(beta-D-glucuronate)(out) = 17beta-estradiol 17-O-(beta-D-glucuronate)(in). The enzyme catalyses taurocholate(out) = taurocholate(in). It carries out the reaction prostaglandin E2(out) = prostaglandin E2(in). Its function is as follows. Organic anion antiporter with apparent broad substrate specificity. Recognizes various substrates including thyroid hormones 3,3',5-triiodo-L-thyronine (T3), L-thyroxine (T4) and 3,3',5'-triiodo-L-thyronine (rT3), conjugated steroids such as estrone 3-sulfate and estradiol 17-beta glucuronide, bile acids such as taurocholate and prostanoids such as prostaglandin E2, likely operating in a tissue-specific manner. May be involved in uptake of metabolites from the circulation into organs such as kidney, liver or placenta. Possibly drives the selective transport of thyroid hormones and estrogens coupled to an outward glutamate gradient across the microvillous membrane of the placenta. The transport mechanism, its electrogenicity and potential tissue-specific counterions remain to be elucidated. This is Solute carrier organic anion transporter family member 4A1 (SLCO4A1) from Homo sapiens (Human).